Consider the following 1771-residue polypeptide: Gag-Pro-Pol polyprotein (1771 aa).

A lipid anchor (N-myristoyl glycine; by host) is attached at Gly2. A propeptide spanning residues 101–161 (AAVAQTEEIL…TKKPKRFPVL (61 aa)) is cleaved from the precursor. Polar residues-rich tracts occupy residues 113–125 (NSQTDLTKTSQNP) and 140–152 (KSSSLQDKGLSST). The disordered stretch occupies residues 113 to 178 (NSQTDLTKTS…DPEDPNPSEV (66 aa)). The PPXY motif motif lies at 202–205 (PPPY). The PTAP/PSAP motif signature appears at 210–213 (PSAP). The stretch at 216-257 (MAVVNPKEELKEKIAQLEEQIKLEELHQALISKLQKLKTGNE) forms a coiled coil. The disordered stretch occupies residues 260-279 (THPDTAGGLSRTPHWPGQHI). The PTAP/PSAP motif motif lies at 335-338 (ATAP). 2 consecutive CCHC-type zinc fingers follow at residues 547–564 (GCCFKCGKKGHFAKNCHE) and 576–593 (GLCPRCKRGKHWANECKS). The tract at residues 592–626 (KSKTDNQGNPIPPHQGNRVEGPAPGPETSLWGSQL) is disordered. Positions 780–856 (FTGLIDTGAD…LPVNLWGRDL (77 aa)) constitute a Peptidase A2 domain. Asp785 serves as the catalytic Protease; shared with dimeric partner. In terms of domain architecture, G-patch spans 867–913 (PNDIVTAQMLAQGYSPGKGLGKKENGILHPIPNQGQSNKKGFGNFLT). A Reverse transcriptase domain is found at 959–1147 (LEAGHITESS…DPYTYLGFEL (189 aa)). The Mg(2+) site is built by Asp1024, Asp1099, Asp1100, Asp1370, Glu1399, Asp1420, and Asp1484. The RNase H type-1 domain maps to 1361–1492 (LNNALLVFTD…ADLATKIVAS (132 aa)). An Integrase-type zinc finger spans residues 1496–1537 (TNLESAQNAHTLHHLNAQTLRLMFNIPREQARQIVKQCPICV). Residues His1505, His1509, Cys1533, and Cys1536 each contribute to the Zn(2+) site. Residues 1550 to 1719 (RGLFPNMIWQ…NPKKQFAMVK (170 aa)) form the Integrase catalytic domain. Mg(2+) contacts are provided by Asp1561, Asp1618, and Glu1654. The integrase-type DNA-binding region spans 1716–1765 (AMVKWKDPLDNTWHGPDPVLIWGRGSVCVYSQTYDAARWLPERLVRQVSN).

The protein belongs to the retroviral Pol polyprotein family. Homodimer. In terms of assembly, interacts with the G-patch peptide. As to quaternary structure, interacts with the reverse transcriptase/ribonuclease H. Homotrimer. The cofactor is Mg(2+). Post-translationally, released by autocatalytic processing. The protease can undergo further autoprocessing to yield 2 shorter but enzymatically active forms of 12 kDa and 13 kDa. Myristoylated. Myristoylation of the matrix (MA) domain mediates the transport and binding of Gag polyproteins to the host plasma membrane and is required for the assembly of viral particles. In terms of processing, specific enzymatic cleavages in vivo yield mature proteins.

Its subcellular location is the virion. It catalyses the reaction DNA(n) + a 2'-deoxyribonucleoside 5'-triphosphate = DNA(n+1) + diphosphate. The enzyme catalyses Endonucleolytic cleavage to 5'-phosphomonoester.. The catalysed reaction is dUTP + H2O = dUMP + diphosphate + H(+). Its function is as follows. Matrix protein. Functionally, nucleocapsid protein p14: Nucleocapsid protein. In terms of biological role, capsid protein. The aspartyl protease mediates proteolytic cleavages of Gag and Gag-Pol polyproteins during or shortly after the release of the virion from the plasma membrane. Cleavages take place as an ordered, step-wise cascade to yield mature proteins. This process is called maturation. Displays maximal activity during the budding process just prior to particle release from the cell. Its function is as follows. Enhances the activity of the reverse transcriptase. May be part of the mature RT. Functionally, RT is a multifunctional enzyme that converts the viral dimeric RNA genome into dsDNA in the cytoplasm, shortly after virus entry into the cell. This enzyme displays a DNA polymerase activity that can copy either DNA or RNA templates, and a ribonuclease H (RNase H) activity that cleaves the RNA strand of RNA-DNA heteroduplexes in a partially processive 3' to 5' endonucleasic mode. Conversion of viral genomic RNA into dsDNA requires many steps. A tRNA binds to the primer-binding site (PBS) situated at the 5' end of the viral RNA. RT uses the 3' end of the tRNA primer to perfom a short round of RNA-dependent minus-strand DNA synthesis. The reading proceeds through the U5 region and ends after the repeated (R) region which is present at both ends of viral RNA. The portion of the RNA-DNA heteroduplex is digested by the RNase H, resulting in a ssDNA product attached to the tRNA primer. This ssDNA/tRNA hybridizes with the identical R region situated at the 3' end of viral RNA. This template exchange, known as minus-strand DNA strong stop transfer, can be either intra- or intermolecular. RT uses the 3' end of this newly synthesized short ssDNA to perfom the RNA-dependent minus-strand DNA synthesis of the whole template. RNase H digests the RNA template except for a polypurine tract (PPT) situated at the 5' end of the genome. It is not clear if both polymerase and RNase H activities are simultaneous. RNase H probably can proceed both in a polymerase-dependent (RNA cut into small fragments by the same RT performing DNA synthesis) and a polymerase-independent mode (cleavage of remaining RNA fragments by free RTs). Secondly, RT performs DNA-directed plus-strand DNA synthesis using the PPT that has not been removed by RNase H as primers. PPT and tRNA primers are then removed by RNase H. The 3' and 5' ssDNA PBS regions hybridize to form a circular dsDNA intermediate. Strand displacement synthesis by RT to the PBS and PPT ends produces a blunt ended, linear dsDNA copy of the viral genome that includes long terminal repeats (LTRs) at both ends. In terms of biological role, catalyzes viral DNA integration into the host chromosome, by performing a series of DNA cutting and joining reactions. The polypeptide is Gag-Pro-Pol polyprotein (gag-pro-pol) (Macaca mulatta (Rhesus macaque)).